The chain runs to 192 residues: MQMQTYKLVVVGGGGVGKSAITIQFIQSYFVTDYDPTIEDSYTKQCNIDDVPAKLDILDTAGQEEFSAMREQYMRSGEGFLLVFALNDHSSFDEIPKFQRQILRVKDRDEFPMLMVGNKCDLKHQQQVSLEEAQNTSRNLMIPYIECSAKLRVNVDQAFHELVRIVRKFQIAERPFIEQDYKKKGKRKCCLM.

GTP is bound at residue 12 to 19 (GGGGVGKS). The Effector region signature appears at 34 to 42 (YDPTIEDSY). Cys46 is lipidated: S-palmitoyl cysteine. Residues 59-63 (DTAGQ) and 118-121 (NKCD) each bind GTP. S-palmitoyl cysteine attachment occurs at residues Cys120 and Cys147. The residue at position 189 (Cys189) is a Cysteine methyl ester. Cys189 is lipidated: S-farnesyl cysteine. A propeptide spans 190–192 (CLM) (removed in mature form).

It belongs to the small GTPase superfamily. Ras family. As to quaternary structure, interacts with hzg.

The protein resides in the cell membrane. It carries out the reaction GTP + H2O = GDP + phosphate + H(+). Its activity is regulated as follows. Alternates between an inactive form bound to GDP and an active form bound to GTP. Activated by a guanine nucleotide-exchange factor (GEF) and inactivated by a GTPase-activating protein (GAP). Its function is as follows. May be involved in endocytic processes and/or other transport pathways mediated by vesicle trafficking. May interact functionally with ROP protein. Ras proteins bind GDP/GTP and possess intrinsic GTPase activity. The polypeptide is Ras-like protein 2 (Ras64B) (Drosophila melanogaster (Fruit fly)).